The sequence spans 469 residues: Glutamate--tRNA ligase (469 aa).

The 'HIGH' region motif lies at 11-21 (PSPTGFIHLGN). Positions 118–131 (GEKPRYDGTWRPEP) are enriched in basic and acidic residues. The tract at residues 118–139 (GEKPRYDGTWRPEPGKVLPEPP) is disordered. A 'KMSKS' region motif is present at residues 243-247 (KMSKR). ATP is bound at residue K246.

Belongs to the class-I aminoacyl-tRNA synthetase family. Glutamate--tRNA ligase type 1 subfamily. In terms of assembly, monomer.

It localises to the cytoplasm. It carries out the reaction tRNA(Glu) + L-glutamate + ATP = L-glutamyl-tRNA(Glu) + AMP + diphosphate. Functionally, catalyzes the attachment of glutamate to tRNA(Glu) in a two-step reaction: glutamate is first activated by ATP to form Glu-AMP and then transferred to the acceptor end of tRNA(Glu). The polypeptide is Glutamate--tRNA ligase (Burkholderia mallei (strain NCTC 10247)).